The primary structure comprises 193 residues: Ion-translocating oxidoreductase complex subunit A (193 aa).

A run of 6 helical transmembrane segments spans residues 5-25, 39-59, 72-92, 102-122, 134-154, and 171-191; these read ILLIISTALINNFVLVKFLGL, IGMGLATMFVLTVASLCAYLV, LRTLIFILVIAVVVQFTEMVI, LLGIFLPLITTNCAVLGVALL, VIYGFSASLGFSLVLVLFAAL, and SIALITAGLMSLAFMGFSGLV.

The protein belongs to the NqrDE/RnfAE family. In terms of assembly, the complex is composed of six subunits: RnfA, RnfB, RnfC, RnfD, RnfE and RnfG.

The protein resides in the cell inner membrane. Functionally, part of a membrane-bound complex that couples electron transfer with translocation of ions across the membrane. The chain is Ion-translocating oxidoreductase complex subunit A from Histophilus somni (strain 129Pt) (Haemophilus somnus).